The sequence spans 227 residues: MPSGDASADPIEARFDPAAMPARMAAALDAMRLGIPVVVLDDADRENEADLIIAADRLTHAGMAMLIRECSGIVCLCLTAEKAAVLGLRPMVEHNRSQYGTAFTVSIEARVGVSTGVSAADRITTIRAAVAPDADAQSVVSPGHVFPLVAQAGGVLARRGHTEGSVDLARLAGLSPAGVLCELMLPDGTMARRDDAVRFADQHGLPVLTIEDIARYREQMARAVSFA.

D-ribulose 5-phosphate is bound by residues 45–46 (RE), Asp-50, 158–162 (RRGHT), and Glu-182. Glu-46 contributes to the Mg(2+) binding site. His-161 lines the Mg(2+) pocket.

It belongs to the DHBP synthase family. In terms of assembly, homodimer. The cofactor is Mg(2+). Mn(2+) serves as cofactor.

It carries out the reaction D-ribulose 5-phosphate = (2S)-2-hydroxy-3-oxobutyl phosphate + formate + H(+). It functions in the pathway cofactor biosynthesis; riboflavin biosynthesis; 2-hydroxy-3-oxobutyl phosphate from D-ribulose 5-phosphate: step 1/1. Its function is as follows. Catalyzes the conversion of D-ribulose 5-phosphate to formate and 3,4-dihydroxy-2-butanone 4-phosphate. The sequence is that of 3,4-dihydroxy-2-butanone 4-phosphate synthase from Ralstonia nicotianae (strain ATCC BAA-1114 / GMI1000) (Ralstonia solanacearum).